The sequence spans 320 residues: ATP-dependent 6-phosphofructokinase (320 aa).

ATP is bound at residue glycine 11. 21-25 (RAIAR) serves as a coordination point for ADP. ATP-binding positions include 72 to 73 (RF) and 102 to 105 (GDGS). Aspartate 103 serves as a coordination point for Mg(2+). Substrate is bound by residues 125–127 (TID), arginine 162, and 169–171 (MGR). Aspartate 127 serves as the catalytic Proton acceptor. Residues 185–187 (GAD) and 213–215 (KDH) each bind ADP. Substrate-binding positions include glutamate 222, arginine 243, and 249–252 (HIQR).

It belongs to the phosphofructokinase type A (PFKA) family. ATP-dependent PFK group I subfamily. Prokaryotic clade 'B1' sub-subfamily. As to quaternary structure, homotetramer. Mg(2+) serves as cofactor.

It is found in the cytoplasm. It catalyses the reaction beta-D-fructose 6-phosphate + ATP = beta-D-fructose 1,6-bisphosphate + ADP + H(+). Its pathway is carbohydrate degradation; glycolysis; D-glyceraldehyde 3-phosphate and glycerone phosphate from D-glucose: step 3/4. Its activity is regulated as follows. Allosterically activated by ADP and other diphosphonucleosides, and allosterically inhibited by phosphoenolpyruvate. In terms of biological role, catalyzes the phosphorylation of D-fructose 6-phosphate to fructose 1,6-bisphosphate by ATP, the first committing step of glycolysis. This chain is ATP-dependent 6-phosphofructokinase, found in Ligilactobacillus salivarius (strain UCC118) (Lactobacillus salivarius).